Reading from the N-terminus, the 392-residue chain is Dihydroorotate dehydrogenase (quinone) (392 aa).

FMN-binding positions include 90–94 (AGFDK) and Thr114. A substrate-binding site is contributed by Lys94. Residue 139 to 143 (NRMGF) participates in substrate binding. Positions 173 and 206 each coordinate FMN. Substrate is bound at residue Asn206. Ser209 acts as the Nucleophile in catalysis. Substrate is bound at residue Asn211. The FMN site is built by Lys243 and Val271. 272-273 (NT) contacts substrate. FMN is bound by residues Gly301, Gly330, and 351–352 (YT).

This sequence belongs to the dihydroorotate dehydrogenase family. Type 2 subfamily. In terms of assembly, monomer. Requires FMN as cofactor.

It localises to the cell membrane. It catalyses the reaction (S)-dihydroorotate + a quinone = orotate + a quinol. The protein operates within pyrimidine metabolism; UMP biosynthesis via de novo pathway; orotate from (S)-dihydroorotate (quinone route): step 1/1. Functionally, catalyzes the conversion of dihydroorotate to orotate with quinone as electron acceptor. The protein is Dihydroorotate dehydrogenase (quinone) of Prochlorococcus marinus (strain MIT 9313).